A 186-amino-acid chain; its full sequence is UPF0397 protein SGO_0469 (186 aa).

5 helical membrane passes run 14-34 (VVATGIGAALFVVIGMVSIPT), 50-70 (LFGVVFGPIVGFLTGFIGHAL), 77-97 (GNPWWTWVLASGLFGLVVGLL), 119-139 (AQFVANALVWVVIAPLGDILI), and 152-172 (VVATVANGLTVAVAGTLLLIA).

This sequence belongs to the UPF0397 family.

It localises to the cell membrane. The sequence is that of UPF0397 protein SGO_0469 from Streptococcus gordonii (strain Challis / ATCC 35105 / BCRC 15272 / CH1 / DL1 / V288).